The sequence spans 75 residues: Small ribosomal subunit protein bS18 (75 aa).

Belongs to the bacterial ribosomal protein bS18 family. In terms of assembly, part of the 30S ribosomal subunit. Forms a tight heterodimer with protein bS6.

Functionally, binds as a heterodimer with protein bS6 to the central domain of the 16S rRNA, where it helps stabilize the platform of the 30S subunit. This Dinoroseobacter shibae (strain DSM 16493 / NCIMB 14021 / DFL 12) protein is Small ribosomal subunit protein bS18.